The chain runs to 536 residues: Indolin-2-one monooxygenase (536 aa).

Residues 18–34 (GTATHALLLGVLIFLVI) traverse the membrane as a helical segment. Position 480 (cysteine 480) interacts with heme.

It belongs to the cytochrome P450 family. The cofactor is heme.

The protein localises to the membrane. It catalyses the reaction indolin-2-one + reduced [NADPH--hemoprotein reductase] + O2 = 3-hydroxyindolin-2-one + oxidized [NADPH--hemoprotein reductase] + H2O + H(+). It functions in the pathway secondary metabolite biosynthesis; 2,4-dihydroxy-1,4-benzoxazin-3-one biosynthesis; 2,4-dihydroxy-1,4-benzoxazin-3-one from indoleglycerol phosphate: step 3/5. In terms of biological role, catalyzes the conversion of indolin-2-one to 3-hydroxyindolin-2-one. The polypeptide is Indolin-2-one monooxygenase (CYP71C2) (Zea mays (Maize)).